A 127-amino-acid chain; its full sequence is UPF0325 protein ASA_3165 (127 aa).

This sequence belongs to the UPF0325 family.

This Aeromonas salmonicida (strain A449) protein is UPF0325 protein ASA_3165.